The sequence spans 148 residues: uncharacterized protein (148 aa).

A signal peptide spans 1–19 (MLSNAKLLLSLAMASTALG). N-linked (GlcNAc...) asparagine glycosylation is found at Asn41 and Asn59. The GPI-anchor amidated asparagine moiety is linked to residue Asn127. Positions 128–148 (AANARAIPGALGLAGAVMMLL) are cleaved as a propeptide — removed in mature form.

Belongs to the SED1 family. In terms of processing, the GPI-anchor is attached to the protein in the endoplasmic reticulum and serves to target the protein to the cell surface. There, the glucosamine-inositol phospholipid moiety is cleaved off and the GPI-modified mannoprotein is covalently attached via its lipidless GPI glycan remnant to the 1,6-beta-glucan of the outer cell wall layer.

Its subcellular location is the secreted. The protein resides in the cell wall. It is found in the membrane. Its function is as follows. Cell wall protein that plays a role in adaptation and resistance to cell wall stress. This is an uncharacterized protein from Saccharomyces cerevisiae (strain ATCC 204508 / S288c) (Baker's yeast).